The sequence spans 105 residues: uncharacterized protein (105 aa).

Helical transmembrane passes span 10–30 (YVVF…FKIG) and 48–68 (YPLA…YPPS).

It is found in the membrane. This is an uncharacterized protein from Acanthamoeba polyphaga mimivirus (APMV).